We begin with the raw amino-acid sequence, 410 residues long: Transcription factor Dp-1 (410 aa).

Residue Lys-3 is modified to N6-acetyllysine. Ser-23 bears the Phosphoserine; by CDK2 mark. The interval 77–114 is disordered; it reads VVGSPHTPNTHFVSQNQPSDPSPWSAGKRNRKGEKNGK. Residues 82 to 95 are compositionally biased toward polar residues; it reads HTPNTHFVSQNQPS. Residues 104-114 show a composition bias toward basic residues; sequence KRNRKGEKNGK. Residues 105-127 are interaction with CEBPA; sequence RNRKGEKNGKGLRHFSMKVCEKV. The DNA-binding element occupies 113–195; that stretch reads GKGLRHFSMK…KKEIKWIGLP (83 aa). The short motif at 161–195 is the DEF box element; that stretch reads DQKNIRRRVYDALNVLMAMNIISKEKKEIKWIGLP. Residues 204-277 form a dimerization region; that stretch reads SLEVERQRRL…KKTVIDCSIS (74 aa). The tract at residues 211-327 is enhances binding of RB protein to E2F; that stretch reads RRLERIKQKQ…DLRVARSLVP (117 aa). A DCB1 region spans residues 214–246; the sequence is ERIKQKQSQLQELILQQIAFKNLVQRNRQVEQQ. Positions 259–315 are DCB2; that stretch reads LPFIIVNTSKKTVIDCSISNDKFEYLFNFDNTFEIHDDIEVLKRMGMACGLESGSCS. Positions 370–410 are disordered; that stretch reads GALATSSSGSQYSGSRVETPVSCVGEDDEDDEDFNENEEED. A compositionally biased stretch (low complexity) spans 375 to 384; that stretch reads SSSGSQYSGS. Residues 394-410 show a composition bias toward acidic residues; sequence GEDDEDDEDFNENEEED.

The protein belongs to the E2F/DP family. As to quaternary structure, component of the E2F:DP transcription factor complex. Forms heterodimers with E2F family members. The complex can interact with hypophosphorylated retinoblastoma protein RB1 and related proteins (RBL1 and RBL2) that inhibit the E2F transactivation domain. This repression involves recruitment of histone deacetylase (HDAC). During the cell cycle, from mid-to-late G1 phase, RB family members become phosphorylated, detach from the DRTF1/E2F complex to render E2F transcriptionally active. Part of the E2F6.com-1 complex in G0 phase is composed of E2F6, MGA, MAX, TFDP1, CBX3, BAT8, EUHMTASE1, RING1, RNF2, MBLR, L3MBTL2 YAF2. Component of the DREAM complex (also named LINC complex) at least composed of E2F4, E2F5, LIN9, LIN37, LIN52, LIN54, MYBL1, MYBL2, RBL1, RBL2, RBBP4, TFDP1 and TFDP2. The complex exists in quiescent cells where it represses cell cycle-dependent genes. It dissociates in S phase when LIN9, LIN37, LIN52 and LIN54 form a subcomplex that binds to MYBL2. The complex TFDP1:E2F1 interacts with CEBPA; the interaction prevents CEBPA binding to target gene promoters and represses its transcriptional activity. Post-translationally, ubiquitinated by the BCR(KBTBD5) complex, leading to its subsequent degradation. In terms of processing, phosphorylation by E2F1-bound cyclin A-CDK2, in the S phase, inhibits E2F-mediated DNA binding and transactivation.

Its subcellular location is the nucleus. It localises to the cytoplasm. Its function is as follows. Can stimulate E2F-dependent transcription. Binds DNA cooperatively with E2F family members through the E2 recognition site, 5'-TTTC[CG]CGC-3', found in the promoter region of a number of genes whose products are involved in cell cycle regulation or in DNA replication. The E2F1:DP complex appears to mediate both cell proliferation and apoptosis. Blocks adipocyte differentiation by repressing CEBPA binding to its target gene promoters. The polypeptide is Transcription factor Dp-1 (TFDP1) (Bos taurus (Bovine)).